A 339-amino-acid chain; its full sequence is Thermospermine synthase ACAULIS5 (339 aa).

Residues 33-270 form the PABS domain; sequence CHWYEETIDD…DTWGWVMASD (238 aa). Residues Q62, E117, D137, and 168–169 each bind S-adenosyl 3-(methylsulfanyl)propylamine; that span reads DA. D186 functions as the Proton acceptor in the catalytic mechanism.

Belongs to the spermidine/spermine synthase family. Highly expressed in stem internodes and roots. Lower levels in young seedlings before flowering and rosette leaves. Expressed in the vascular tissues. Restricted to procambial and/or provascular cells during primary root development and early leaves development.

It carries out the reaction S-adenosyl 3-(methylsulfanyl)propylamine + spermidine = thermospermine + S-methyl-5'-thioadenosine + H(+). Functionally, required for correct xylem specification through regulation of the lifetime of the xylem elements. Prevents premature death of the xylem vessel elements. The sequence is that of Thermospermine synthase ACAULIS5 (ACL5) from Arabidopsis thaliana (Mouse-ear cress).